A 93-amino-acid polypeptide reads, in one-letter code: Small ribosomal subunit protein uS19 (93 aa).

The protein belongs to the universal ribosomal protein uS19 family.

Protein S19 forms a complex with S13 that binds strongly to the 16S ribosomal RNA. The chain is Small ribosomal subunit protein uS19 from Clostridioides difficile (strain 630) (Peptoclostridium difficile).